The following is a 363-amino-acid chain: Putative agmatine deiminase (363 aa).

A compositionally biased stretch (polar residues) spans M1–K10. The disordered stretch occupies residues M1–H20. The Amidino-cysteine intermediate role is filled by C355.

This sequence belongs to the agmatine deiminase family.

The catalysed reaction is agmatine + H2O = N-carbamoylputrescine + NH4(+). The polypeptide is Putative agmatine deiminase (Photobacterium profundum (strain SS9)).